The chain runs to 287 residues: Protoheme IX farnesyltransferase (287 aa).

The next 8 helical transmembrane spans lie at Ile-9–Leu-29, Leu-31–Ala-51, Ile-94–Ile-114, Val-132–Leu-152, Trp-158–Leu-178, Ala-202–Phe-222, Val-228–Leu-248, and Leu-267–Leu-287.

The protein belongs to the UbiA prenyltransferase family. Protoheme IX farnesyltransferase subfamily.

It localises to the cell inner membrane. It catalyses the reaction heme b + (2E,6E)-farnesyl diphosphate + H2O = Fe(II)-heme o + diphosphate. It functions in the pathway porphyrin-containing compound metabolism; heme O biosynthesis; heme O from protoheme: step 1/1. In terms of biological role, converts heme B (protoheme IX) to heme O by substitution of the vinyl group on carbon 2 of heme B porphyrin ring with a hydroxyethyl farnesyl side group. The sequence is that of Protoheme IX farnesyltransferase from Rhodopirellula baltica (strain DSM 10527 / NCIMB 13988 / SH1).